We begin with the raw amino-acid sequence, 277 residues long: Pantothenate synthetase (277 aa).

ATP is bound at residue 26-33 (MGNLHEGH). His-33 acts as the Proton donor in catalysis. Gln-57 contacts (R)-pantoate. Gln-57 serves as a coordination point for beta-alanine. An ATP-binding site is contributed by 144-147 (GKKD). Residue Gln-150 coordinates (R)-pantoate. ATP contacts are provided by residues Val-173 and 181–184 (LSSR).

The protein belongs to the pantothenate synthetase family. Homodimer.

The protein resides in the cytoplasm. It carries out the reaction (R)-pantoate + beta-alanine + ATP = (R)-pantothenate + AMP + diphosphate + H(+). Its pathway is cofactor biosynthesis; (R)-pantothenate biosynthesis; (R)-pantothenate from (R)-pantoate and beta-alanine: step 1/1. Catalyzes the condensation of pantoate with beta-alanine in an ATP-dependent reaction via a pantoyl-adenylate intermediate. The chain is Pantothenate synthetase from Paraburkholderia xenovorans (strain LB400).